Consider the following 43-residue polypeptide: Defensin (43 aa).

3 disulfide bridges follow: C3-C34, C20-C39, and C24-C41.

This sequence belongs to the invertebrate defensin family. Type 1 subfamily.

Its subcellular location is the secreted. Functionally, antibacterial peptide. Affects Gram-positive bacteria M.luteus, B.megaterium, A.viridans, S.aureus and S.saprophyticus. Moderate activity against P.acidilactici and B.subtilis QB935. Also affects Gram-negative bacterium, D22 form of E.coli. The sequence is that of Defensin from Pyrrhocoris apterus (Sap sucking bug).